A 919-amino-acid chain; its full sequence is MEALILLSSQQSGSIKNNCASTSDIENVEDDDSIVIVSDSPTSSPVTLSTSSPVSSSSSSSPISTSVVPPTSSSSNKKANGLFSLIATELSQLDRSSPSSSPNTPKTPKTPKTPKTPKKTSPDSNEANQEVPKQKEVFEHTPTTTSTSTTPIKPVKDPKEKEKDLENDRKRQSFMLHWRFKPSTANNTNNNNNINNNNNINSSSSSNNNNNNNNNNNNNNNNNNNNNNNNNNNINNSSNNNSNCNNNNNNNNNNNNNNNNNSNNTQPLSPTTASQQANSQQNQQSSPTSSQTNETNGNPPEFNRGRRNSTPSLQNFVSHWKFDPKAHQKQQILQQHQQQLLLQQQEQQLQQQLLQQQQQQQQQQQQQQQQQQQQQQQQQQQQQQLQQQQQQQLQQQQQQQQQQQQQYFRPISPEHIYESPNENNNGGSFQKPNTHFHPYSRGPLGLNLKGVSGSPSHSPRVSQSPRVPSHPHSADQSPFHTPRQTERRLSLPSVPSYQAAYQSYQQQHTQQQTTIQQQQNQQHQYQQQYQQLQQLQQQQQQQQQQQQQQQQQQQQQQQQQQSSSPPSPPSPQSQPQNSSSPRQPSQTPQFYIPISNIHRHHQQIHSPHLSPHPPHSPHMPQSPHMPHSPHLMPHSPHSPHMPHSPHMPHSPHMPHSPHMPHSPHMPHSPHHMPHSPHYGSSPNLNGGKGSNNFLQSIPEVPYGNNLTNLNGSSVDSYSNSSPTPQSPPFSPHHQSTIKPCIITPSPRLLKTHNENYMSSPRQPLSPHNQHVYLSHSPSPPPSSSPHEHCNYIDKNDEYYSNNNNNNNYNNNNNNNNENCNHYHNNSSSHNYQTNNNYCNNNNNNNNNNNNNNNNNNNNNNNIINNNIIKEDKLPSMRDLLSHLNINHQDGPNSASSTPRLPTDHINNIDEKSKSKLLFF.

Residues 1 to 15 (MEALILLSSQQSGSI) show a composition bias toward low complexity. Disordered stretches follow at residues 1–167 (MEAL…DLEN), 179–312 (RFKP…STPS), 415–491 (HIYE…RLSL), 553–739 (QQQQ…TIKP), 751–863 (THNE…NNII), and 883–906 (LNIN…DHIN). Polar residues predominate over residues 16–25 (KNNCASTSDI). Composition is skewed to low complexity over residues 34-75 (IVIV…SSSS), 96-107 (SSPSSSPNTPKT), and 141-153 (TPTT…TPIK). The span at 154-167 (PVKDPKEKEKDLEN) shows a compositional bias: basic and acidic residues. Over residues 186-292 (NNTNNNNNIN…QQSSPTSSQT (107 aa)) the composition is skewed to low complexity. Residues 420–433 (PNENNNGGSFQKPN) are compositionally biased toward polar residues. 4 stretches are compositionally biased toward low complexity: residues 450-471 (GVSG…PSHP), 553-564 (QQQQQQQQQSSS), 573-589 (SQPQ…QTPQ), and 618-635 (HMPQ…MPHS). Residues 678-695 (YGSSPNLNGGKGSNNFLQ) are compositionally biased toward polar residues. Positions 712–723 (SSVDSYSNSSPT) are enriched in low complexity. Over residues 754 to 768 (ENYMSSPRQPLSPHN) the composition is skewed to polar residues. The segment covering 785–797 (PHEHCNYIDKNDE) has biased composition (basic and acidic residues). Residues 798–863 (YYSNNNNNNN…NNNNNNNNII (66 aa)) show a composition bias toward low complexity. Positions 883–899 (LNINHQDGPNSASSTPR) are enriched in polar residues.

This is an uncharacterized protein from Dictyostelium discoideum (Social amoeba).